Consider the following 476-residue polypeptide: Sulfite exporter TauE/SafE family protein 3 (476 aa).

12 helical membrane-spanning segments follow: residues 8–28, 76–92, 99–115, 120–142, 151–171, 172–192, 257–277, 291–311, 339–359, 360–380, 397–417, and 433–453; these read WLGLRSVTIFLINFSLAFAFV, FNWQIVLGTLVGFFGAA, VGGGGIFVPMLSLIIGF, ATAISKCMIMGASVSTVYYNLRL, IIDYDLALLIQPMLMLGISIG, VAFNVIFPDWLVTVLLIVLFL, VYWKELGLLVFVWIVFLALQI, VINLLQIPVAVGVSGYEAVAL, FGIIAGIVGGLLGLGGGFIMG, PLFLELGVPPQVSSATATFAM, FPVPYALYLVGVATIAAWVGQ, and IIFILASMIFISAISLGGVGI.

Belongs to the 4-toluene sulfonate uptake permease (TSUP) (TC 2.A.102) family.

The protein localises to the membrane. The chain is Sulfite exporter TauE/SafE family protein 3 from Arabidopsis thaliana (Mouse-ear cress).